Reading from the N-terminus, the 100-residue chain is Urease subunit gamma (100 aa).

The protein belongs to the urease gamma subunit family. Heterotrimer of UreA (gamma), UreB (beta) and UreC (alpha) subunits. Three heterotrimers associate to form the active enzyme.

The protein localises to the cytoplasm. The catalysed reaction is urea + 2 H2O + H(+) = hydrogencarbonate + 2 NH4(+). Its pathway is nitrogen metabolism; urea degradation; CO(2) and NH(3) from urea (urease route): step 1/1. The protein is Urease subunit gamma of Polaromonas naphthalenivorans (strain CJ2).